Reading from the N-terminus, the 297-residue chain is Ubiquinone biosynthesis protein COQ4, mitochondrial (297 aa).

Residues 1–54 (MLSSARARLPISLCSFSLPFARLPNTLSRYQETWQRLPGRTHPTRSIRTTPAYE) constitute a mitochondrion transit peptide. Positions 178, 179, 182, and 194 each coordinate Zn(2+).

It belongs to the COQ4 family. As to quaternary structure, component of a multi-subunit COQ enzyme complex, composed of at least COQ3, COQ4, COQ5, COQ6, COQ7 and COQ9. Zn(2+) is required as a cofactor.

Its subcellular location is the mitochondrion inner membrane. The enzyme catalyses a 4-hydroxy-3-methoxy-5-(all-trans-polyprenyl)benzoate + H(+) = a 2-methoxy-6-(all-trans-polyprenyl)phenol + CO2. It participates in cofactor biosynthesis; ubiquinone biosynthesis. Lyase that catalyzes the C1-decarboxylation of 4-hydroxy-3-methoxy-5-(all-trans-polyprenyl)benzoic acid into 2-methoxy-6-(all-trans-polyprenyl)phenol during ubiquinone biosynthesis. The sequence is that of Ubiquinone biosynthesis protein COQ4, mitochondrial from Laccaria bicolor (strain S238N-H82 / ATCC MYA-4686) (Bicoloured deceiver).